We begin with the raw amino-acid sequence, 296 residues long: Glycerol-3-phosphate dehydrogenase [NAD(P)+] (296 aa).

Residues Trp-12, Arg-31, and Lys-80 each contribute to the NADPH site. Sn-glycerol 3-phosphate is bound by residues Lys-80, Gly-108, and Ser-110. Residue Ala-112 coordinates NADPH. The sn-glycerol 3-phosphate site is built by Lys-162, Asp-215, Ser-225, Arg-226, and Asn-227. The active-site Proton acceptor is the Lys-162. An NADPH-binding site is contributed by Arg-226. Residues Val-250 and Glu-252 each coordinate NADPH.

Belongs to the NAD-dependent glycerol-3-phosphate dehydrogenase family.

Its subcellular location is the cytoplasm. The catalysed reaction is sn-glycerol 3-phosphate + NAD(+) = dihydroxyacetone phosphate + NADH + H(+). The enzyme catalyses sn-glycerol 3-phosphate + NADP(+) = dihydroxyacetone phosphate + NADPH + H(+). Its pathway is membrane lipid metabolism; glycerophospholipid metabolism. In terms of biological role, catalyzes the reduction of the glycolytic intermediate dihydroxyacetone phosphate (DHAP) to sn-glycerol 3-phosphate (G3P), the key precursor for phospholipid synthesis. In Sulfurimonas denitrificans (strain ATCC 33889 / DSM 1251) (Thiomicrospira denitrificans (strain ATCC 33889 / DSM 1251)), this protein is Glycerol-3-phosphate dehydrogenase [NAD(P)+].